We begin with the raw amino-acid sequence, 192 residues long: Transcription antitermination protein NusB (192 aa).

The protein belongs to the NusB family.

Involved in transcription antitermination. Required for transcription of ribosomal RNA (rRNA) genes. Binds specifically to the boxA antiterminator sequence of the ribosomal RNA (rrn) operons. This Lactococcus lactis subsp. lactis (strain IL1403) (Streptococcus lactis) protein is Transcription antitermination protein NusB.